The chain runs to 304 residues: Putative S-adenosyl-L-methionine-dependent methyltransferase Mmcs_1043 (304 aa).

S-adenosyl-L-methionine-binding positions include aspartate 130 and 159 to 160 (DL).

Belongs to the UPF0677 family.

Functionally, exhibits S-adenosyl-L-methionine-dependent methyltransferase activity. In Mycobacterium sp. (strain MCS), this protein is Putative S-adenosyl-L-methionine-dependent methyltransferase Mmcs_1043.